Consider the following 225-residue polypeptide: Transcription factor MYB1 (225 aa).

HTH myb-type domains are found at residues 11-67 and 68-118; these read LGRV…KPSI and KRGH…YKKH. 2 DNA-binding regions (H-T-H motif) span residues 39-63 and 91-114; these read WKRVPERAGLNRCRKSCRWRWLNYL and WSLIAAKLPGRTINDVKNYCNTHL.

No interactions with bHLH.

It localises to the nucleus. Functionally, activates DODA1 and CYP76AD1 in the betalain red pigment pathway. The chain is Transcription factor MYB1 from Beta vulgaris (Sugar beet).